A 436-amino-acid polypeptide reads, in one-letter code: ATP-dependent RNA helicase RhlB (436 aa).

Positions 9–37 (QKFADFPLHKEVHQALNEAGFEFCTPIQA) match the Q motif motif. Residues 40-219 (LPILLEKKDI…YDHMNEPEKV (180 aa)) enclose the Helicase ATP-binding domain. 53-60 (AQTGTGKT) serves as a coordination point for ATP. Positions 165–168 (DEAD) match the DEAD box motif. In terms of domain architecture, Helicase C-terminal spans 243 to 390 (KMPLLLSLLE…VTSYDSDALL (148 aa)). The disordered stretch occupies residues 392–436 (DIPPPVRIHRKPSTHTRNTRDRGASRPQGGQRSGPRRHDRTRRHS). The span at 425–436 (GPRRHDRTRRHS) shows a compositional bias: basic residues.

Belongs to the DEAD box helicase family. RhlB subfamily. As to quaternary structure, component of the RNA degradosome, which is a multiprotein complex involved in RNA processing and mRNA degradation.

It is found in the cytoplasm. It catalyses the reaction ATP + H2O = ADP + phosphate + H(+). Its function is as follows. DEAD-box RNA helicase involved in RNA degradation. Has RNA-dependent ATPase activity and unwinds double-stranded RNA. The polypeptide is ATP-dependent RNA helicase RhlB (Shewanella halifaxensis (strain HAW-EB4)).